Here is a 484-residue protein sequence, read N- to C-terminus: Sperm-associated antigen 8 (484 aa).

A compositionally biased stretch (basic and acidic residues) spans M1 to Q11. 3 disordered regions span residues M1–S32, D123–V221, and L324–Q348. Composition is skewed to low complexity over residues S20–S32 and S125–S160. The segment covering G161–T195 has biased composition (gly residues). Over residues L324–S339 the composition is skewed to polar residues. Mn stretches follow at residues S332–S345 and E384–A398. The segment at P455 to G484 is disordered. Gly residues predominate over residues Q475–G484.

It belongs to the SPAG8 family. Microtubule inner protein component of sperm flagellar doublet microtubules. Interacts with FHL5 (via second LIM domain). Interacts with RANBP9. In terms of tissue distribution, expressed in trachea multiciliated cells.

Its subcellular location is the cytoplasm. It localises to the nucleus. It is found in the cytoplasmic vesicle. The protein localises to the secretory vesicle. The protein resides in the acrosome. Its subcellular location is the cytoskeleton. It localises to the microtubule organizing center. It is found in the spindle. The protein localises to the cilium axoneme. The protein resides in the flagellum axoneme. Its function is as follows. Microtubule inner protein (MIP) part of the dynein-decorated doublet microtubules (DMTs) in cilia axoneme, which is required for motile cilia beating. Plays a role in spermatogenesis by enhancing the binding of CREM isoform tau to its coactivator FHL5 and increasing the FHL5-regulated transcriptional activation of CREM isoform tau. Involved in the acrosome reaction and in binding of sperm to the zona pellucida. Plays a role in regulation of the cell cycle by controlling progression through the G2/M phase, possibly by delaying the activation of CDK1 which is required for entry into mitosis. May play a role in fertility and microtubule formation through interaction with RANBP9. The polypeptide is Sperm-associated antigen 8 (SPAG8) (Bos taurus (Bovine)).